The sequence spans 101 residues: NADH-ubiquinone oxidoreductase chain 4L (101 aa).

3 consecutive transmembrane segments (helical) span residues 5 to 25 (LNCT…IFLN), 29 to 49 (ILVM…NLIF), and 64 to 84 (LLIL…LVIY).

The protein belongs to the complex I subunit 4L family.

It localises to the mitochondrion membrane. The catalysed reaction is a ubiquinone + NADH + 5 H(+)(in) = a ubiquinol + NAD(+) + 4 H(+)(out). Functionally, core subunit of the mitochondrial membrane respiratory chain NADH dehydrogenase (Complex I) that is believed to belong to the minimal assembly required for catalysis. Complex I functions in the transfer of electrons from NADH to the respiratory chain. The immediate electron acceptor for the enzyme is believed to be ubiquinone. In Chondrus crispus (Carrageen Irish moss), this protein is NADH-ubiquinone oxidoreductase chain 4L (ND4L).